The sequence spans 98 residues: MNTHFTYVLQCADQTLYCGYTTDLEKRLATHNSGKGAKYTKTRLPVKLLASVNFDNKNDAMSCEWWFKHKLVRQQKLKLIKNNLIKEKFLEYLLAKQK.

One can recognise a GIY-YIG domain in the interval 2-79 (NTHFTYVLQC…KLVRQQKLKL (78 aa)).

This sequence belongs to the UPF0213 family.

This is UPF0213 protein LACR_2011 from Lactococcus lactis subsp. cremoris (strain SK11).